Reading from the N-terminus, the 795-residue chain is ATP-dependent RNA helicase DHX15 (795 aa).

The tract at residues 1–111 (MSKRHRLDLG…HTGHTGHTSL (111 aa)) is disordered. At S15 the chain carries Phosphoserine. Over residues 20 to 62 (AGTDGKDRERDRDREDRSKDRDRERDRGDREREREKEKEKELR) the composition is skewed to basic and acidic residues. Over residues 79-110 (ASHSAHSTHSAHSTHSTHSAHSTHTGHTGHTS) the composition is skewed to low complexity. The 167-residue stretch at 147 to 313 (TDILVRHQSF…FDNCPLLTIP (167 aa)) folds into the Helicase ATP-binding domain. 160-167 (GETGSGKT) is a binding site for ATP. The DEAH box signature appears at 260-263 (DEAH). One can recognise a Helicase C-terminal domain in the interval 338 to 518 (TVIQIHMCEE…SVVLQLKKLG (181 aa)). N6-acetyllysine is present on K488. K786 is covalently cross-linked (Glycyl lysine isopeptide (Lys-Gly) (interchain with G-Cter in SUMO2)).

The protein belongs to the DEAD box helicase family. DEAH subfamily. DDX15/PRP43 sub-subfamily. As to quaternary structure, component of the U11/U12 snRNPs that are part of the U12-type spliceosome. Identified in the Intron Large spliceosome complex (IL, also named intron lariat spliceosome), a post-mRNA release spliceosomal complex containing the excised intron, U2, U5 and U6 snRNPs, and splicing factors; the association may be transient. The IL complex exists in two distinct conformations, one with the DHX15 (ILS2) and one without (ILS1). Interacts with TFIP11 (via G-patch domain); indicative for a recruitment to the IL complex. Interacts with SSB/La. Interacts with GPATCH2 (via G-patch domain); promoting the RNA helicase activity. Interacts with NKRF (via G-patch domain); promoting the RNA helicase activity. Interacts with NLRP6. In terms of tissue distribution, ubiquitous.

It localises to the nucleus. The protein localises to the nucleolus. It catalyses the reaction ATP + H2O = ADP + phosphate + H(+). Its activity is regulated as follows. ATPase activity is enhanced upon binding to G-patch domain-containing proteins. G-patch domain-containing proteins act like a brace that tethers mobile sections of DHX15 together, stabilizing a functional conformation with high RNA affinity, thereby promoting the ATPase activity. Functionally, RNA helicase involved in mRNA processing and antiviral innate immunity. Pre-mRNA processing factor involved in disassembly of spliceosomes after the release of mature mRNA. In cooperation with TFIP11 seem to be involved in the transition of the U2, U5 and U6 snRNP-containing IL complex to the snRNP-free IS complex leading to efficient debranching and turnover of excised introns. Plays a key role in antiviral innate immunity by promoting both MAVS-dependent signaling and NLRP6 inflammasome. Acts as an RNA virus sensor: recognizes and binds viral double stranded RNA (dsRNA) and activates the MAVS-dependent signaling to produce interferon-beta and interferon lambda-3 (IFNL3). Involved in intestinal antiviral innate immunity together with NLRP6: recognizes and binds viral dsRNA and promotes activation of the NLRP6 inflammasome in intestinal epithelial cells to restrict infection by enteric viruses. The NLRP6 inflammasome acts by promoting maturation and secretion of IL18 in the extracellular milieu. Also involved in antibacterial innate immunity by promoting Wnt-induced antimicrobial protein expression in Paneth cells. This chain is ATP-dependent RNA helicase DHX15, found in Mus musculus (Mouse).